The sequence spans 247 residues: Coproheme decarboxylase (247 aa).

Fe-coproporphyrin III-binding positions include Arg129, 143 to 147 (YPMDK), His170, Gln183, and Ser221. Residue Tyr143 is part of the active site.

Belongs to the ChdC family. Type 1 subfamily. Requires Fe-coproporphyrin III as cofactor.

It carries out the reaction Fe-coproporphyrin III + 2 H2O2 + 2 H(+) = heme b + 2 CO2 + 4 H2O. The catalysed reaction is Fe-coproporphyrin III + H2O2 + H(+) = harderoheme III + CO2 + 2 H2O. The enzyme catalyses harderoheme III + H2O2 + H(+) = heme b + CO2 + 2 H2O. It participates in porphyrin-containing compound metabolism; protoheme biosynthesis. Its function is as follows. Involved in coproporphyrin-dependent heme b biosynthesis. Catalyzes the decarboxylation of Fe-coproporphyrin III (coproheme) to heme b (protoheme IX), the last step of the pathway. The reaction occurs in a stepwise manner with a three-propionate intermediate. The protein is Coproheme decarboxylase of Bacillus cereus (strain AH820).